Reading from the N-terminus, the 82-residue chain is Envelope small membrane protein (82 aa).

The Virion surface segment spans residues 1 to 16 (MLPFVHEQIGTIIVNF). Residues 17 to 37 (FILTVVCAITLVVCLAILTAI) traverse the membrane as a helical segment. Over 38 to 78 (RLCVQCASGVNTLLFVPAFYIYNTGRNAYFKFQENRPPFPP) the chain is Intravirion.

Belongs to the betacoronaviruses E protein family. In terms of assembly, homopentamer. Interacts with membrane protein M in the budding compartment of the host cell, which is located between endoplasmic reticulum and the Golgi complex. Interacts with Nucleoprotein.

Its subcellular location is the host Golgi apparatus membrane. Functionally, plays a central role in virus morphogenesis and assembly. Acts as a viroporin and self-assembles in host membranes forming pentameric protein-lipid pores that allow ion transport. Also plays a role in the induction of apoptosis. The sequence is that of Envelope small membrane protein from Tylonycteris pachypus (Lesser bamboo bat).